A 949-amino-acid chain; its full sequence is UvrABC system protein A (949 aa).

ATP is bound at residue 42-49; sequence GLSGSGKS. The C4-type zinc-finger motif lies at 262–289; that stretch reads CPVCSYSLPELEPRLFSFNNPMGSCPTC. ABC transporter domains are found at residues 319 to 596 and 616 to 945; these read WDKR…ENSV and VNPD…KYLK. Position 649 to 656 (649 to 656) interacts with ATP; it reads GVSGSGKS. Residues 748 to 774 form a C4-type zinc finger; the sequence is CEACQGDGVIKVEMHFLPDVYVPCEVC.

Belongs to the ABC transporter superfamily. UvrA family. Forms a heterotetramer with UvrB during the search for lesions.

It localises to the cytoplasm. The UvrABC repair system catalyzes the recognition and processing of DNA lesions. UvrA is an ATPase and a DNA-binding protein. A damage recognition complex composed of 2 UvrA and 2 UvrB subunits scans DNA for abnormalities. When the presence of a lesion has been verified by UvrB, the UvrA molecules dissociate. The protein is UvrABC system protein A of Neisseria meningitidis serogroup B (strain ATCC BAA-335 / MC58).